The chain runs to 320 residues: Acetyl-coenzyme A carboxylase carboxyl transferase subunit alpha (320 aa).

In terms of domain architecture, CoA carboxyltransferase C-terminal spans 33–294 (AFESEIQALR…GDAVEDELKA (262 aa)).

Belongs to the AccA family. As to quaternary structure, acetyl-CoA carboxylase is a heterohexamer composed of biotin carboxyl carrier protein (AccB), biotin carboxylase (AccC) and two subunits each of ACCase subunit alpha (AccA) and ACCase subunit beta (AccD).

It is found in the cytoplasm. The enzyme catalyses N(6)-carboxybiotinyl-L-lysyl-[protein] + acetyl-CoA = N(6)-biotinyl-L-lysyl-[protein] + malonyl-CoA. Its pathway is lipid metabolism; malonyl-CoA biosynthesis; malonyl-CoA from acetyl-CoA: step 1/1. Its function is as follows. Component of the acetyl coenzyme A carboxylase (ACC) complex. First, biotin carboxylase catalyzes the carboxylation of biotin on its carrier protein (BCCP) and then the CO(2) group is transferred by the carboxyltransferase to acetyl-CoA to form malonyl-CoA. In Caulobacter sp. (strain K31), this protein is Acetyl-coenzyme A carboxylase carboxyl transferase subunit alpha.